A 396-amino-acid chain; its full sequence is Transcription factor IIIB 50 kDa subunit (396 aa).

Residues 3 to 36 form a TFIIB-type zinc finger; sequence GAKRCPDCGSSEIVEDAHYSQDQLVCADCGCILS. Residues Cys7, Cys10, Cys28, and Cys31 each contribute to the Zn(2+) site. Residues 173–249 form repeat 2; it reads VKSHCRSFKL…SRRLSCSLSR (77 aa). Residue Cys342 is modified to Cysteine sulfenic acid (-SOH).

It belongs to the TFIIB family. Component of TFIIIB complexes. Interacts with TBP and forms a ternary complex with TBp and target DNA sequences. Post-translationally, in response to oxidative stress, a Cys-residue is reversibly oxidized to cysteine sulfenic acid. This impairs formation of a ternary complex with TBP and DNA and down-regulates expression of target genes in response to oxidative stress.

The protein localises to the nucleus. General activator of RNA polymerase III transcription. Factor exclusively required for RNA polymerase III transcription of genes with promoter elements upstream of the initiation sites. Contributes to the regulation of gene expression; functions as activator in the absence of oxidative stress. Down-regulates expression of target genes in response to oxidative stress. Overexpression protects cells against apoptosis in response to oxidative stress. This Xenopus laevis (African clawed frog) protein is Transcription factor IIIB 50 kDa subunit (brf2).